Here is a 235-residue protein sequence, read N- to C-terminus: Small ribosomal subunit protein uS3 (235 aa).

A KH type-2 domain is found at 39-107 (VRKFLLGQLS…PTKLNISEIR (69 aa)).

This sequence belongs to the universal ribosomal protein uS3 family. In terms of assembly, part of the 30S ribosomal subunit. Forms a tight complex with proteins S10 and S14.

Its function is as follows. Binds the lower part of the 30S subunit head. Binds mRNA in the 70S ribosome, positioning it for translation. The polypeptide is Small ribosomal subunit protein uS3 (Blochmanniella floridana).